The following is a 120-amino-acid chain: UPF0231 protein ETA_08290 (120 aa).

The protein belongs to the UPF0231 family.

In Erwinia tasmaniensis (strain DSM 17950 / CFBP 7177 / CIP 109463 / NCPPB 4357 / Et1/99), this protein is UPF0231 protein ETA_08290.